Here is a 120-residue protein sequence, read N- to C-terminus: Spermidine export protein MdtJ (120 aa).

Transmembrane regions (helical) follow at residues 1 to 21 (MFYW…TLSM), 31 to 51 (AGFI…SFAV), 54 to 74 (IALG…ITIF), and 81 to 101 (EALS…IVLI).

Belongs to the drug/metabolite transporter (DMT) superfamily. Small multidrug resistance (SMR) (TC 2.A.7.1) family. MdtJ subfamily. As to quaternary structure, forms a complex with MdtI.

It is found in the cell inner membrane. Its function is as follows. Catalyzes the excretion of spermidine. This is Spermidine export protein MdtJ from Salmonella choleraesuis (strain SC-B67).